A 495-amino-acid chain; its full sequence is Cytochrome P450 Tp4149 (495 aa).

The next 2 membrane-spanning stretches (helical) occupy residues 4 to 24 (ILSL…MFFI) and 208 to 228 (YLSM…SWVD). N-linked (GlcNAc...) asparagine glycosylation occurs at asparagine 419. Residue cysteine 437 coordinates heme.

Belongs to the cytochrome P450 family. Requires heme as cofactor.

It is found in the membrane. It functions in the pathway secondary metabolite biosynthesis; terpenoid biosynthesis. Probably involved in the biosynthesis of germacrene-derived sesquiterpene lactones. The protein is Cytochrome P450 Tp4149 of Tanacetum parthenium (Feverfew).